Here is an 85-residue protein sequence, read N- to C-terminus: uncharacterized protein (85 aa).

This is an uncharacterized protein from Gallid herpesvirus 2 (strain Chicken/Md5/ATCC VR-987) (GaHV-2).